The primary structure comprises 223 residues: MAAQEQKTLKIDVKTPAGKVDGAIELPAELFDVPANIALMHQVVTAQRAAARQGTHSTKTRGEVSGGGRKPYRQKGTGRARQGSTRAPQFTGGGVVHGPKPRDYSQRTPKKMIAAALRGALSDRARNGRIHAITELVEGQNPSTKSARAFLASLTERKQVLVVIGRSDEAGAKSVRNLPGVHILAPDQLNTYDVLRADDVVFSVEALNAYIAANTTTSEEVSA.

Residues 49–106 (AAARQGTHSTKTRGEVSGGGRKPYRQKGTGRARQGSTRAPQFTGGGVVHGPKPRDYSQ) are disordered.

The protein belongs to the universal ribosomal protein uL4 family. Part of the 50S ribosomal subunit.

In terms of biological role, one of the primary rRNA binding proteins, this protein initially binds near the 5'-end of the 23S rRNA. It is important during the early stages of 50S assembly. It makes multiple contacts with different domains of the 23S rRNA in the assembled 50S subunit and ribosome. Forms part of the polypeptide exit tunnel. The polypeptide is Large ribosomal subunit protein uL4 (Mycobacterium bovis (strain ATCC BAA-935 / AF2122/97)).